The primary structure comprises 501 residues: Pyruvate kinase (501 aa).

A substrate-binding site is contributed by arginine 50. Asparagine 52, serine 54, aspartate 85, and threonine 86 together coordinate K(+). 52-55 (NFSH) is a binding site for ATP. The ATP site is built by arginine 92 and lysine 178. Residue glutamate 243 participates in Mg(2+) binding. Glycine 266, aspartate 267, and threonine 299 together coordinate substrate. Residue aspartate 267 participates in Mg(2+) binding.

This sequence belongs to the pyruvate kinase family. As to quaternary structure, homotetramer. Mg(2+) is required as a cofactor. It depends on K(+) as a cofactor.

It carries out the reaction pyruvate + ATP = phosphoenolpyruvate + ADP + H(+). It functions in the pathway carbohydrate degradation; glycolysis; pyruvate from D-glyceraldehyde 3-phosphate: step 5/5. This chain is Pyruvate kinase (PYK1), found in Lachancea kluyveri (strain ATCC 58438 / CBS 3082 / BCRC 21498 / NBRC 1685 / JCM 7257 / NCYC 543 / NRRL Y-12651) (Yeast).